Here is a 224-residue protein sequence, read N- to C-terminus: uncharacterized protein (224 aa).

This is an uncharacterized protein from Bacillus anthracis.